We begin with the raw amino-acid sequence, 392 residues long: Chaperone protein DnaJ (392 aa).

The region spanning 2–67 is the J domain; sequence DYYTILGVAK…QKRESYDRYG (66 aa). The segment at 149-227 adopts a CR-type zinc-finger fold; the sequence is GVEKELLVSG…CRGQGRIKDK (79 aa). Residues C162, C165, C179, C182, C201, C204, C215, and C218 each coordinate Zn(2+). 4 CXXCXGXG motif repeats span residues 162-169, 179-186, 201-208, and 215-222; these read CDACSGSG, CDRCKGSG, CPDCSGEG, and CSVCRGQG.

This sequence belongs to the DnaJ family. In terms of assembly, homodimer. The cofactor is Zn(2+).

The protein localises to the cytoplasm. Its function is as follows. Participates actively in the response to hyperosmotic and heat shock by preventing the aggregation of stress-denatured proteins and by disaggregating proteins, also in an autonomous, DnaK-independent fashion. Unfolded proteins bind initially to DnaJ; upon interaction with the DnaJ-bound protein, DnaK hydrolyzes its bound ATP, resulting in the formation of a stable complex. GrpE releases ADP from DnaK; ATP binding to DnaK triggers the release of the substrate protein, thus completing the reaction cycle. Several rounds of ATP-dependent interactions between DnaJ, DnaK and GrpE are required for fully efficient folding. Also involved, together with DnaK and GrpE, in the DNA replication of plasmids through activation of initiation proteins. The chain is Chaperone protein DnaJ from Chlamydia trachomatis serovar L2 (strain ATCC VR-902B / DSM 19102 / 434/Bu).